Consider the following 1530-residue polypeptide: Neurexin-1 (1530 aa).

The N-terminal stretch at 1 to 30 (MGTALLQRGGCFLLCLSLLLLGCWAELGSG) is a signal peptide. The 182-residue stretch at 31 to 212 (LEFPGAEGQW…KLDDEPPNSG (182 aa)) folds into the Laminin G-like 1 domain. Topologically, residues 31 to 1454 (LEFPGAEGQW…EVIRESSSTT (1424 aa)) are extracellular. Residues N125 and N190 are each glycosylated (N-linked (GlcNAc...) asparagine). The interval 199–221 (SGEVKLDDEPPNSGGGSPCEAGE) is disordered. Positions 213 to 256 (GGSPCEAGEEGEGGVCLNGGVCSVVDDQAVCDCSRTGFRGKDCS) constitute an EGF-like 1 domain. Cystine bridges form between C228-C243 and C245-C255. Laminin G-like domains are found at residues 299-496 (IATF…AFKC) and 503-695 (DPIT…KPSC). Ca(2+) contacts are provided by D345, L362, and M430. 5 disulfide bridges follow: C460-C496, C666-C695, C703-C714, C708-C723, and C725-C735. The EGF-like 2 domain occupies 699–736 (TAKPCLSNPCKNNGMCRDGWNRYVCDCSGTGYLGRSCE). A glycan (O-linked (Glc...) serine) is linked at S705. 2 Laminin G-like domains span residues 741-914 (VLSY…IDYC) and 928-1103 (DPVT…ERGC). Residues D788 and L805 each coordinate Ca(2+). N-linked (GlcNAc...) asparagine glycosylation occurs at N813. A Ca(2+)-binding site is contributed by R864. 5 cysteine pairs are disulfide-bonded: C906/C914, C1075/C1103, C1110/C1121, C1115/C1130, and C1132/C1142. Residues 1106-1143 (PSTTCQEDSCSNQGVCLQQWDGISCDCSMTSFSGPLCN) form the EGF-like 3 domain. A Laminin G-like 6 domain is found at 1149-1347 (YIFSKGGGQI…DANIAIVGNV (199 aa)). Positions 1199 and 1216 each coordinate Ca(2+). N1246 is a glycosylation site (N-linked (GlcNAc...) asparagine). Ca(2+) contacts are provided by I1298 and N1300. O-linked (Xyl...) (heparan sulfate) serine glycosylation occurs at S1408. Residues 1411 to 1443 (CPSDDEDIDPCEPSSGGLANPTRAGGREPYPGS) form a disordered region. The chain crosses the membrane as a helical span at residues 1455 to 1475 (GMVVGIVAAAALCILILLYAM). Over 1476-1530 (YKYRNRDEGSYHVDESRNYISNSAQSNGAVVKEKQPSSAKSANKNKKNKDKEYYV) the chain is Cytoplasmic. The interaction with CASK stretch occupies residues 1497–1523 (NSAQSNGAVVKEKQPSSAKSANKNKKN). Residues 1497-1530 (NSAQSNGAVVKEKQPSSAKSANKNKKNKDKEYYV) form a disordered region.

This sequence belongs to the neurexin family. As to quaternary structure, interacts (via laminin G-like domain 2 and/or laminin G-like domain 6) with NLGN1 forming a heterotetramer, where one NLGN1 dimer interacts with one NRXN1 dimer. Also interacts (via laminin G-like domain 2 and/or laminin G-like domain 6) with NLGN2, NLGN3 and NLGN4L; interactions with NLGN1, NLGN2, NLGN3 and NLGN4L are calcium-dependent. Interacts (via cytoplasmic C-terminal region) with CASK (via the PDZ, SH3 and guanylate kinase-like domains). Interacts (via cytoplasmic C-terminus) with CASKIN1 and APBA1. Interacts (via laminin G-like domain 2) with NXPH1 and NXPH3. Alpha-type isoforms (neurexin-1-alpha) interact (via laminin G-like domain 2 and/or laminin G-like domain 6) with DAG1 (via alpha-dystroglycan chain). Interacts with LRRTM1, LRRTM2, LRRTM3 and LRRTM4. Interacts with SYT13 and SYTL1. Interacts with CBLN1, CBLN2 and, less avidly, with CBLN4. Interacts with CLSTN3. Alpha-type isoforms interact with alpha-latrotoxin from spider venom. Post-translationally, O-glycosylated; contains heparan sulfate. Heparan sulfate attachment is required for synapse development by mediating interactions with neuroligins and LRRTM2.

Its subcellular location is the presynaptic cell membrane. Cell surface protein involved in cell-cell-interactions, exocytosis of secretory granules and regulation of signal transmission. Function is isoform-specific. Alpha-type isoforms have a long N-terminus with six laminin G-like domains and play an important role in synaptic signal transmission. Alpha-type isoforms play a role in the regulation of calcium channel activity and Ca(2+)-triggered neurotransmitter release at synapses and at neuromuscular junctions. They play an important role in Ca(2+)-triggered exocytosis of secretory granules in pituitary gland. They may affect their functions at synapses and in endocrine cells via their interactions with proteins from the exocytotic machinery. Likewise, alpha-type isoforms play a role in regulating the activity of postsynaptic NMDA receptors, a subtype of glutamate-gated ion channels. Both alpha-type and beta-type isoforms may play a role in the formation or maintenance of synaptic junctions via their interactions (via the extracellular domains) with neuroligin family members, CBLN1 or CBLN2. In vitro, triggers the de novo formation of presynaptic structures. May be involved in specification of excitatory synapses. Alpha-type isoforms were first identified as receptors for alpha-latrotoxin from spider venom. The polypeptide is Neurexin-1 (NRXN1) (Bos taurus (Bovine)).